Reading from the N-terminus, the 398-residue chain is Enoyl-[acyl-carrier-protein] reductase [NADH] (398 aa).

NAD(+) contacts are provided by residues 48 to 53, 74 to 75, 111 to 112, and 139 to 140; these read GASTGY, FE, DA, and LA. A substrate-binding site is contributed by tyrosine 225. Residue tyrosine 235 is the Proton donor of the active site. NAD(+)-binding positions include lysine 244 and 273–275; that span reads VVT.

It belongs to the TER reductase family. As to quaternary structure, monomer.

The enzyme catalyses a 2,3-saturated acyl-[ACP] + NAD(+) = a (2E)-enoyl-[ACP] + NADH + H(+). Its pathway is lipid metabolism; fatty acid biosynthesis. In terms of biological role, involved in the final reduction of the elongation cycle of fatty acid synthesis (FAS II). Catalyzes the reduction of a carbon-carbon double bond in an enoyl moiety that is covalently linked to an acyl carrier protein (ACP). This chain is Enoyl-[acyl-carrier-protein] reductase [NADH], found in Paraburkholderia xenovorans (strain LB400).